A 466-amino-acid chain; its full sequence is cAMP-dependent protein kinase regulatory subunit (466 aa).

The tract at residues 25–231 is dimerization and phosphorylation; sequence QFAANYFTKR…RLEKAVGKNF (207 aa). The span at 71–80 shows a compositional bias: low complexity; sequence ASLSHGSSKA. Disordered regions lie at residues 71–90, 109–139, 154–179, and 193–218; these read ASLS…ISSS, STHI…PGIF, NSSV…VVNP, and SVSG…KSPE. Positions 81–90 are enriched in polar residues; it reads NASQSGISSS. Basic and acidic residues predominate over residues 109–118; the sequence is STHIVDHLDS. Residue S193 is modified to Phosphoserine. The segment covering 200-218 has biased composition (basic and acidic residues); sequence QPDHLDDWKPENFQEKSPE. Residues 232–347, E297, R306, 350–466, E416, and R425 each bind 3',5'-cyclic AMP; these read LFNK…LLKN and ILKS…RSKH.

This sequence belongs to the cAMP-dependent kinase regulatory chain family. Tetramer, composed of 2 regulatory (R) and 2 catalytic (C) subunits. In the presence of cAMP it dissociates into 2 active monomeric C subunits and an R dimer.

This chain is cAMP-dependent protein kinase regulatory subunit (PKAR), found in Kluyveromyces lactis (strain ATCC 8585 / CBS 2359 / DSM 70799 / NBRC 1267 / NRRL Y-1140 / WM37) (Yeast).